The following is a 478-amino-acid chain: RNA-binding protein 42 (478 aa).

The span at 1-20 (MASAMAGAGPAPGLPVAGGP) shows a compositional bias: low complexity. The disordered stretch occupies residues 1 to 33 (MASAMAGAGPAPGLPVAGGPVVPGPGVGIPGKS). Ala-2 is modified (N-acetylalanine). Ser-133 is modified (phosphoserine). An asymmetric dimethylarginine mark is found at Arg-151, Arg-156, Arg-166, and Arg-179. 2 disordered regions span residues 171–207 (LSSAAGGPRPMALRPPHQALVGPPLPGPPGPPMMLPP) and 317–354 (SLRPRPRPPRPEPPPGLMALEVPEPLGEDKKKGKPEKL). Residues 193-205 (PPLPGPPGPPMML) are compositionally biased toward pro residues. Positions 234–478 (ELGLGLGLGL…QKEKKKLGLR (245 aa)) are necessary for interaction with HNRNPK. The span at 343–354 (GEDKKKGKPEKL) shows a compositional bias: basic and acidic residues. One can recognise an RRM domain in the interval 379-457 (FRIFCGDLGN…RPIKLRKSMW (79 aa)).

The protein belongs to the RRM RBM42 family. As to quaternary structure, interacts with HNRNPK. As to expression, expressed in cell lines (at protein level). Expressed in heart, brain, spleen, lung, liver, skeletal muscle, kidney and testis.

Its subcellular location is the nucleus. The protein resides in the cytoplasm. In terms of biological role, binds (via the RRM domain) to the 3'-untranslated region (UTR) of CDKN1A mRNA. This is RNA-binding protein 42 (Rbm42) from Mus musculus (Mouse).